Here is a 167-residue protein sequence, read N- to C-terminus: Transmembrane protein 229B (167 aa).

The Cytoplasmic portion of the chain corresponds to 1-14; sequence MASAEPLTALSRWY. The helical transmembrane segment at 15–35 threads the bilayer; that stretch reads LYAIHGYFCEVMFTAAWEFVV. The Extracellular segment spans residues 36–40; that stretch reads NFNWK. The chain crosses the membrane as a helical span at residues 41–61; it reads FPGVTSVWALFIYGTSILIVE. The Cytoplasmic segment spans residues 62-73; the sequence is RMYLRLRGRCPL. A helical membrane pass occupies residues 74–94; that stretch reads LLRCLIYTLWTYLWEFTTGFI. Over 95–111 the chain is Extracellular; the sequence is LRQFNACPWDYSQFDFD. Residues 112-132 traverse the membrane as a helical segment; that stretch reads FMGLITLEYAVPWFCGALLVE. Over 133-167 the chain is Cytoplasmic; that stretch reads QFVIRNTLRLRFDKDAEPGEPSGALALANGHVKTD.

This sequence belongs to the TMEM229 family.

The protein resides in the membrane. This is Transmembrane protein 229B (TMEM229B) from Bos taurus (Bovine).